A 357-amino-acid chain; its full sequence is tRNA-specific 2-thiouridylase MnmA (357 aa).

Residues 11 to 18 (AMSGGVDS) and leucine 37 contribute to the ATP site. The active-site Nucleophile is cysteine 102. Residues cysteine 102 and cysteine 197 are joined by a disulfide bond. Glycine 126 provides a ligand contact to ATP. The segment at 148-150 (KDQ) is interaction with tRNA. Residue cysteine 197 is the Cysteine persulfide intermediate of the active site. The interval 301-302 (RY) is interaction with tRNA.

This sequence belongs to the MnmA/TRMU family.

The protein localises to the cytoplasm. It carries out the reaction S-sulfanyl-L-cysteinyl-[protein] + uridine(34) in tRNA + AH2 + ATP = 2-thiouridine(34) in tRNA + L-cysteinyl-[protein] + A + AMP + diphosphate + H(+). In terms of biological role, catalyzes the 2-thiolation of uridine at the wobble position (U34) of tRNA, leading to the formation of s(2)U34. The protein is tRNA-specific 2-thiouridylase MnmA of Dehalococcoides mccartyi (strain ATCC BAA-2266 / KCTC 15142 / 195) (Dehalococcoides ethenogenes (strain 195)).